Consider the following 267-residue polypeptide: Palmitoyltransferase ZDHHC12 (267 aa).

Residues 1–9 are Cytoplasmic-facing; the sequence is MAPWALLSP. The helical transmembrane segment at 10 to 30 threads the bilayer; sequence GVLVRTGHTVLTWGITLVLFL. Residues 31–43 are Lumenal-facing; it reads HDTELRQWEEQGE. Residues 44 to 64 form a helical membrane-spanning segment; it reads LLLPLTFLLLVLGSLLLYLAV. Topologically, residues 65-140 are cytoplasmic; sequence SLMDPGYVNV…ENCVGERNHP (76 aa). Positions 97–147 constitute a DHHC domain; sequence RRCRYCLVLQPLRARHCRECRRCVRRYDHHCPWMENCVGERNHPLFVVYLA. Cysteine 127 (S-palmitoyl cysteine intermediate) is an active-site residue. The chain crosses the membrane as a helical span at residues 141-161; it reads LFVVYLALQLVVLLWGLYLAW. Over 162–178 the chain is Lumenal; it reads SGLRFFQPWGQWLRSSG. The helical transmembrane segment at 179 to 199 threads the bilayer; the sequence is LLFATFLLLSLFSLVASLLLV. Over 200–267 the chain is Cytoplasmic; it reads SHLYLVASNT…EEEEGSSPAV (68 aa).

Belongs to the DHHC palmitoyltransferase family. Widely expressed.

Its subcellular location is the golgi apparatus membrane. The protein resides in the endoplasmic reticulum membrane. It catalyses the reaction L-cysteinyl-[protein] + hexadecanoyl-CoA = S-hexadecanoyl-L-cysteinyl-[protein] + CoA. Functionally, palmitoyltransferase that catalyzes the addition of palmitate onto various protein substrates. Has a palmitoyltransferase activity toward gephyrin/GPHN, regulating its clustering at synapses and its function in gamma-aminobutyric acid receptor clustering. Thereby, indirectly regulates GABAergic synaptic transmission. Negatively regulates NLRP3-driven inflammation. Catalyzes NLRP3 palmitoylation, leading to its degradation via the chaperone-mediated autophagy (CMA) process. The chain is Palmitoyltransferase ZDHHC12 from Homo sapiens (Human).